A 163-amino-acid chain; its full sequence is Nucleotide-binding protein Ava_2001 (163 aa).

It belongs to the YajQ family.

In terms of biological role, nucleotide-binding protein. The protein is Nucleotide-binding protein Ava_2001 of Trichormus variabilis (strain ATCC 29413 / PCC 7937) (Anabaena variabilis).